The following is a 528-amino-acid chain: Chaperonin GroEL, chloroplastic (528 aa).

Residues 29 to 32 (TLGP), 86 to 90 (DGTTT), G414, and D496 contribute to the ATP site.

Belongs to the chaperonin (HSP60) family. As to quaternary structure, forms a cylinder of 14 subunits composed of two heptameric rings stacked back-to-back. Interacts with the co-chaperonin GroES.

The protein resides in the plastid. The protein localises to the chloroplast. The enzyme catalyses ATP + H2O + a folded polypeptide = ADP + phosphate + an unfolded polypeptide.. In terms of biological role, together with its co-chaperonin GroES, plays an essential role in assisting protein folding. The GroEL-GroES system forms a nano-cage that allows encapsulation of the non-native substrate proteins and provides a physical environment optimized to promote and accelerate protein folding. This Gracilaria tenuistipitata var. liui (Red alga) protein is Chaperonin GroEL, chloroplastic.